Reading from the N-terminus, the 885-residue chain is Probable alpha-glucosidase Os06g0675700 (885 aa).

The N-terminal stretch at 1–33 is a signal peptide; it reads MMGSPPAPPARRLGALAVFLLALFLAAPWGVDC. 3 N-linked (GlcNAc...) asparagine glycosylation sites follow: Asn195, Asn378, and Asn397. Residues Asp443 and Glu446 contribute to the active site. N-linked (GlcNAc...) asparagine glycans are attached at residues Asn467 and Asn477. Asp540 (proton donor) is an active-site residue. N-linked (GlcNAc...) asparagine glycosylation is found at Asn576 and Asn844.

This sequence belongs to the glycosyl hydrolase 31 family.

The catalysed reaction is Hydrolysis of terminal, non-reducing (1-&gt;4)-linked alpha-D-glucose residues with release of alpha-D-glucose.. The sequence is that of Probable alpha-glucosidase Os06g0675700 from Oryza sativa subsp. japonica (Rice).